Reading from the N-terminus, the 84-residue chain is Small, acid-soluble spore protein gamma-type (84 aa).

2 stretches are compositionally biased toward polar residues: residues 1–25 (MANS…SAAG) and 34–44 (ASETNAQQVRK). The interval 1 to 84 (MANSNNFSKT…SAEQNKQQNS (84 aa)) is disordered. Repeats lie at residues 21–47 (QSAA…KQNQ) and 48–74 (QSAG…QQNQ). 2 stretches are compositionally biased toward low complexity: residues 45-57 (QNQQ…GQFG) and 71-84 (QQNQ…QQNS).

The protein belongs to the gamma-type SASP family.

SASP are proteins degraded in the first minutes of spore germination and provide amino acids for both new protein synthesis and metabolism. These proteins may be involved in dormant spore's high resistance to UV light. The protein is Small, acid-soluble spore protein gamma-type (sspE) of Bacillus subtilis (strain 168).